The primary structure comprises 351 residues: Protein IQ-DOMAIN 27 (351 aa).

The segment at 15-37 (KKSKDRSHVSGGDSVKGGDHSGD) is disordered. Residues 98–114 (EERWAAVKIQKVFRGSL) are calmodulin-binding. IQ domains are found at residues 99-127 (ERWA…GIVK) and 128-150 (LQAL…SIQT). The Nuclear localization signal motif lies at 191-198 (DRRTKIVE). The segment covering 299 to 310 (SFKAKVRSHSAP) has biased composition (basic residues). A disordered region spans residues 299-351 (SFKAKVRSHSAPRQRSERQRLSLDEVMASKSSVSGVSMSHQHPPRHSCSCDPL). The span at 312-321 (QRSERQRLSL) shows a compositional bias: basic and acidic residues. The segment covering 324-337 (VMASKSSVSGVSMS) has biased composition (low complexity).

This sequence belongs to the IQD family. In terms of assembly, binds to multiple calmodulin (CaM) in the presence of Ca(2+) and CaM-like proteins.

It localises to the nucleus. Its subcellular location is the nucleus envelope. It is found in the cytoplasm. The protein localises to the cytoskeleton. Its function is as follows. May be involved in cooperative interactions with calmodulins or calmodulin-like proteins. Recruits calmodulin proteins to microtubules, thus being a potential scaffold in cellular signaling and trafficking. May associate with nucleic acids and regulate gene expression at the transcriptional or post-transcriptional level. This Arabidopsis thaliana (Mouse-ear cress) protein is Protein IQ-DOMAIN 27.